Here is a 212-residue protein sequence, read N- to C-terminus: Golgi SNAP receptor complex member 2 (212 aa).

Position 1 is an N-acetylmethionine (Met1). The Cytoplasmic segment spans residues Met1–Lys190. The stretch at Asn61 to Arg107 forms a coiled coil. Positions Ile118–Met120 match the IxM motif; signal for cargo packaging into COPII-coated vesicles motif. A helical; Anchor for type IV membrane protein membrane pass occupies residues Tyr191–Leu211. Residue Thr212 is a topological domain, vesicular.

The protein belongs to the GOSR2 family. As to quaternary structure, part of a unique SNARE complex composed of the Golgi SNAREs GOSR1, STX5 and YKT6. Interacts (via IxM motif) with SEC24C and SEC24D; mediates GOSR2 packaging into COPII-coated vesicles. Interacts with BET1.

It is found in the golgi apparatus. It localises to the cis-Golgi network membrane. The protein localises to the golgi apparatus membrane. Its subcellular location is the endoplasmic reticulum membrane. Functionally, involved in transport of proteins from the cis/medial-Golgi to the trans-Golgi network. In Homo sapiens (Human), this protein is Golgi SNAP receptor complex member 2 (GOSR2).